We begin with the raw amino-acid sequence, 180 residues long: Riboflavin kinase (180 aa).

Positions 40 and 42 each coordinate Mg(2+). Residue Glu117 is the Nucleophile of the active site.

This sequence belongs to the flavokinase family. Zn(2+) serves as cofactor. Mg(2+) is required as a cofactor.

It catalyses the reaction riboflavin + ATP = FMN + ADP + H(+). Its pathway is cofactor biosynthesis; FMN biosynthesis; FMN from riboflavin (ATP route): step 1/1. In terms of biological role, catalyzes the phosphorylation of riboflavin (vitamin B2) to form flavin mononucleotide (FMN) coenzyme. This is Riboflavin kinase (FMN1) from Meyerozyma guilliermondii (strain ATCC 6260 / CBS 566 / DSM 6381 / JCM 1539 / NBRC 10279 / NRRL Y-324) (Yeast).